Reading from the N-terminus, the 326-residue chain is tRNA-modifying protein YgfZ (326 aa).

Residues W27 and W189 each coordinate folate.

Belongs to the tRNA-modifying YgfZ family.

The protein localises to the cytoplasm. Folate-binding protein involved in regulating the level of ATP-DnaA and in the modification of some tRNAs. It is probably a key factor in regulatory networks that act via tRNA modification, such as initiation of chromosomal replication. The protein is tRNA-modifying protein YgfZ of Salmonella paratyphi C (strain RKS4594).